The following is a 215-amino-acid chain: MRVILLGAPGAGKGTQAKFITEKFGIPQVSTGDMLRAAVKAETELGLKAKSVMDSGGLVSDDLIIGLIKDRLAQPDCANGVLFDGFPRTIPQAEALLKAGLEIDHVLEIAVDDEEIVKRMSGRRVHEGSGRIYHTIFNPPKVECIDDVTGEPLLQRKDDVEETVRHRLSVYHAQTKPLVEFYSKLEAKDGKPKCSHIPGVGSVEEITAKVLEALK.

10-15 (GAGKGT) provides a ligand contact to ATP. The tract at residues 30–59 (STGDMLRAAVKAETELGLKAKSVMDSGGLV) is NMP. Residues Thr-31, Arg-36, 57–59 (GLV), 85–88 (GFPR), and Gln-92 each bind AMP. The interval 122 to 159 (GRRVHEGSGRIYHTIFNPPKVECIDDVTGEPLLQRKDD) is LID. ATP-binding positions include Arg-123 and 132–133 (IY). The AMP site is built by Arg-156 and Arg-167. Position 201 (Gly-201) interacts with ATP.

Belongs to the adenylate kinase family. Monomer.

It localises to the cytoplasm. The enzyme catalyses AMP + ATP = 2 ADP. It functions in the pathway purine metabolism; AMP biosynthesis via salvage pathway; AMP from ADP: step 1/1. Catalyzes the reversible transfer of the terminal phosphate group between ATP and AMP. Plays an important role in cellular energy homeostasis and in adenine nucleotide metabolism. This Pseudomonas savastanoi pv. phaseolicola (strain 1448A / Race 6) (Pseudomonas syringae pv. phaseolicola (strain 1448A / Race 6)) protein is Adenylate kinase.